Consider the following 908-residue polypeptide: MLGLGTLARKIFGTPNDRKVKSVRSLVARINDLEPEFQALSDEGIKQKTAEFQRRVQEGGESLDDLLPEAFANCREGARRALGLRAFDVQLMGGIFLHQGNIAEMKTGEGKTLVATFPAYLNALAGKGVHVVTVNDYLAKRDAEWMGKVYAQLGLATGVVYPFQSDEEKKAAYAADITYATNNELGFDYLRDNMKASKEEMRQRGHFFAIVDEVDSILIDEARTPLIISGPSQDRSDLYTKVDKLIPELVEEHYKLDEKTRNVTFTEEGNEFLEKRLLETGLLPEGQSLYDPESTTIVHHVNQGLRAHKLFNRDQQYIVRDDEIMLIDEFTGRMMRGRRLSDGLHQAIEAKEGVSIQPENVTLASVTFQNYFRLYEKLGGMTGTAATEAEEFMEIYGLGVVEVPTNRPVARADEHDAVYRTAREKHDGIVASIKDAHERGQPILVGTTSIDKSEALSDLLKSAGIPHNVLNARQHEQEAQIVADAGKLGAVTIATNMAGRGTDIQLGGNVEMKVMQALAADPAAHPDEVRARIEAEHAEEKERVKEAGGLFVLGTERHESRRIDNQLRGRSGRQGDPGRSAFFLSLEDDLMRIFGSDRLDKVLSTLGMKEGEAIVHPWVNKSLEKAQAKVEARNFDIRKQLLKFDDVMNDQRKAIFSQRLEIMETEDLSEIAQDMRYQVIDDLIDQHMPPRSYADQWDIEGMHRAVQDKLGLDAPLAKWAQEEGVDQDVVRERLCEASDRQMTEKAEAFGPETMRSIEKQILLQTIDAKWREHLLTLEHLRSVVGFRGYAQRDPLSEYKTEAFALFESMLNSLRQDVTQKLAQVRPLSEEEQQAMMRQFLDQQRAAAAAEAPVAPAPQPAAAAPQPTPELVGAEAGEPDPAAWGNVARNDPCPCGSGLKYKHCHGRLD.

ATP contacts are provided by residues Gln-90, 108 to 112 (GEGKT), and Asp-503. The segment covering 846–864 (AAAAEAPVAPAPQPAAAAP) has biased composition (low complexity). The interval 846 to 884 (AAAAEAPVAPAPQPAAAAPQPTPELVGAEAGEPDPAAWG) is disordered. Zn(2+) contacts are provided by Cys-892, Cys-894, Cys-903, and His-904.

The protein belongs to the SecA family. In terms of assembly, monomer and homodimer. Part of the essential Sec protein translocation apparatus which comprises SecA, SecYEG and auxiliary proteins SecDF-YajC and YidC. The cofactor is Zn(2+).

The protein resides in the cell inner membrane. It is found in the cytoplasm. The catalysed reaction is ATP + H2O + cellular proteinSide 1 = ADP + phosphate + cellular proteinSide 2.. In terms of biological role, part of the Sec protein translocase complex. Interacts with the SecYEG preprotein conducting channel. Has a central role in coupling the hydrolysis of ATP to the transfer of proteins into and across the cell membrane, serving both as a receptor for the preprotein-SecB complex and as an ATP-driven molecular motor driving the stepwise translocation of polypeptide chains across the membrane. The polypeptide is Protein translocase subunit SecA (Cereibacter sphaeroides (strain KD131 / KCTC 12085) (Rhodobacter sphaeroides)).